The primary structure comprises 120 residues: Ribonuclease P protein component (120 aa).

The protein belongs to the RnpA family. In terms of assembly, consists of a catalytic RNA component (M1 or rnpB) and a protein subunit.

The catalysed reaction is Endonucleolytic cleavage of RNA, removing 5'-extranucleotides from tRNA precursor.. RNaseP catalyzes the removal of the 5'-leader sequence from pre-tRNA to produce the mature 5'-terminus. It can also cleave other RNA substrates such as 4.5S RNA. The protein component plays an auxiliary but essential role in vivo by binding to the 5'-leader sequence and broadening the substrate specificity of the ribozyme. The polypeptide is Ribonuclease P protein component (Chlamydia trachomatis serovar L2 (strain ATCC VR-902B / DSM 19102 / 434/Bu)).